Consider the following 349-residue polypeptide: UDP-N-acetylenolpyruvoylglucosamine reductase (349 aa).

The FAD-binding PCMH-type domain maps to 24 to 197 (FGIAATARFA…VSVTFRLPKQ (174 aa)). The active site involves arginine 173. Serine 249 serves as the catalytic Proton donor. The active site involves glutamate 345.

This sequence belongs to the MurB family. The cofactor is FAD.

Its subcellular location is the cytoplasm. The catalysed reaction is UDP-N-acetyl-alpha-D-muramate + NADP(+) = UDP-N-acetyl-3-O-(1-carboxyvinyl)-alpha-D-glucosamine + NADPH + H(+). Its pathway is cell wall biogenesis; peptidoglycan biosynthesis. Functionally, cell wall formation. The polypeptide is UDP-N-acetylenolpyruvoylglucosamine reductase (Burkholderia lata (strain ATCC 17760 / DSM 23089 / LMG 22485 / NCIMB 9086 / R18194 / 383)).